The following is a 34-amino-acid chain: uncharacterized protein (34 aa).

A helical transmembrane segment spans residues 10 to 30; sequence LIITSSFFAIAVVLVLSVLLI.

The protein localises to the membrane. This is an uncharacterized protein from Escherichia coli O157:H7.